The following is a 427-amino-acid chain: MLDIKIIRKTPEECETRLRKKDPKISLEPVLSLDKEVRQLKTDSETLQAQRRLLSQDIHKAKTQGVDATNLIQEVETLAADLEKIEQHLDQKNAQLHELLSHLPNYPADDIPVSEDKAGNQVIKSVGDLPIFSFPPKHHLELNQELDILDFQAAAKTTGSGWPAYKNRGVLLEWALLTYMLQKQAAHGFQLWLPPLLVKKEILFGSGQIPKFDGQYYRVEDGEQYLYLIPTAEVVLNGFRSQDILTEKELPLYYAACTPCFRREAGAAGAQERGLVRVHQFHKVEMFAFTTPNQDDIAYEKMLSIVEEMLTELKLPYRLSLLSTGDMSFTASKTIDAEVWLPGQKAFYEVSSISQCTDFQSRRSGTRYKDSQGKLQFVHTLNGSGLATPRLLVAILENNQQADGSVVIPEVLRPYLGGLEILLPKDQ.

An L-serine-binding site is contributed by 231–233 (TAE). ATP is bound by residues 262–264 (RRE) and valine 278. Glutamate 285 is an L-serine binding site. Residue 349 to 352 (EVSS) participates in ATP binding. Serine 384 contacts L-serine.

The protein belongs to the class-II aminoacyl-tRNA synthetase family. Type-1 seryl-tRNA synthetase subfamily. In terms of assembly, homodimer. The tRNA molecule binds across the dimer.

It is found in the cytoplasm. The enzyme catalyses tRNA(Ser) + L-serine + ATP = L-seryl-tRNA(Ser) + AMP + diphosphate + H(+). It catalyses the reaction tRNA(Sec) + L-serine + ATP = L-seryl-tRNA(Sec) + AMP + diphosphate + H(+). It participates in aminoacyl-tRNA biosynthesis; selenocysteinyl-tRNA(Sec) biosynthesis; L-seryl-tRNA(Sec) from L-serine and tRNA(Sec): step 1/1. Its function is as follows. Catalyzes the attachment of serine to tRNA(Ser). Is also able to aminoacylate tRNA(Sec) with serine, to form the misacylated tRNA L-seryl-tRNA(Sec), which will be further converted into selenocysteinyl-tRNA(Sec). The polypeptide is Serine--tRNA ligase (Chlamydia pneumoniae (Chlamydophila pneumoniae)).